The chain runs to 462 residues: Protein phosphatase 1M (462 aa).

Basic residues predominate over residues 1–10; sequence MSAGWFRRRF. The disordered stretch occupies residues 1–66; it reads MSAGWFRRRF…PVRSPARGRT (66 aa). The PPM-type phosphatase domain maps to 100-452; it reads EFGIEEDQEW…DDVSVFVIPL (353 aa). Mn(2+)-binding residues include Asp127 and Gly128.

Belongs to the PP2C family. Mg(2+) is required as a cofactor. It depends on Mn(2+) as a cofactor. As to expression, widely expressed with highest levels in testis and lower levels in lung, kidney and brain.

The protein localises to the nucleus. The catalysed reaction is O-phospho-L-seryl-[protein] + H2O = L-seryl-[protein] + phosphate. The enzyme catalyses O-phospho-L-threonyl-[protein] + H2O = L-threonyl-[protein] + phosphate. This Mus musculus (Mouse) protein is Protein phosphatase 1M.